We begin with the raw amino-acid sequence, 483 residues long: ATP-dependent RNA helicase DDX25 (483 aa).

Positions 61-74 (LAANSLLNKLIRQS) match the Nuclear export signal motif. The Q motif signature appears at 97–125 (KTFEELRLKEELLKGIYAMGFNRPSKIQE). The Nuclear localization signal signature appears at 100-114 (EELRLKEELLKGIYA). In terms of domain architecture, Helicase ATP-binding spans 130–300 (MMLAHPPQNL…ERIIPDPNVI (171 aa)). An ATP-binding site is contributed by 143–150 (SQSGTGKT). A DEAD box motif is present at residues 247-250 (DEAD). Positions 311-478 (NIRQYYVLCG…QLDPEDMDEI (168 aa)) constitute a Helicase C-terminal domain.

Belongs to the DEAD box helicase family. In terms of processing, phosphorylated on threonine residues. The phosphorylated form is found in the cytoplasm but not in the nucleus.

It is found in the cytoplasm. The protein localises to the nucleus. The enzyme catalyses ATP + H2O = ADP + phosphate + H(+). Functionally, ATP-dependent RNA helicase. Required for mRNA export and translation regulation during spermatid development. This Bos taurus (Bovine) protein is ATP-dependent RNA helicase DDX25 (DDX25).